We begin with the raw amino-acid sequence, 22 residues long: Motilin (22 aa).

The tract at residues 1 to 22 (FVPIFTHSELQKIREKERNKGQ) is disordered. Residues 9-22 (ELQKIREKERNKGQ) show a composition bias toward basic and acidic residues.

It belongs to the motilin family.

Its subcellular location is the secreted. In terms of biological role, plays an important role in the regulation of interdigestive gastrointestinal motility and indirectly causes rhythmic contraction of duodenal and colonic smooth muscle. The polypeptide is Motilin (MLN) (Canis lupus familiaris (Dog)).